The chain runs to 765 residues: SNF-related serine/threonine-protein kinase (765 aa).

The Protein kinase domain maps to 16-269 (YDLDKTLGRG…LEEIENHPWL (254 aa)). ATP-binding positions include 22–30 (LGRGHFAVV) and lysine 45. Residue aspartate 139 is the Proton acceptor of the active site. Position 162 is a phosphoserine (serine 162). A Phosphothreonine; by LKB1 modification is found at threonine 173. One can recognise a UBA domain in the interval 291 to 334 (SEEEHNSIIQRMVLGDIADRDAIVEALETNRYNHITATYFLLAE). Phosphoserine is present on residues serine 362, serine 390, serine 482, serine 495, and serine 518. The segment at 512–634 (LKMNIASPGT…RCAGPSNSMQ (123 aa)) is disordered. Residues 522–532 (VHKRYHRRKSQ) are compositionally biased toward basic residues. Residues 533 to 542 (GRGSSCSSSE) are compositionally biased toward low complexity. At arginine 534 the chain carries Omega-N-methylarginine. Positions 549–558 (ESRRRLDKDS) are enriched in basic and acidic residues. Gly residues predominate over residues 603–614 (AGGGSPSSGSGG). Serine 607 is modified (phosphoserine).

This sequence belongs to the protein kinase superfamily. CAMK Ser/Thr protein kinase family. It depends on Mg(2+) as a cofactor. Post-translationally, autophosphorylated. Phosphorylation on Thr-173 by STK11/LKB1 in complex with STE20-related adapter-alpha (STRADA) pseudo kinase and CAB39. In terms of tissue distribution, expressed in hematopoietic progenitor cells and leukemic cell lines. Weakly expressed in the testis.

It localises to the nucleus. The enzyme catalyses L-seryl-[protein] + ATP = O-phospho-L-seryl-[protein] + ADP + H(+). It carries out the reaction L-threonyl-[protein] + ATP = O-phospho-L-threonyl-[protein] + ADP + H(+). Its activity is regulated as follows. Activated by phosphorylation on Thr-173. In terms of biological role, may play a role in hematopoietic cell proliferation or differentiation. Potential mediator of neuronal apoptosis. The chain is SNF-related serine/threonine-protein kinase from Homo sapiens (Human).